A 469-amino-acid chain; its full sequence is MGLLSKKASCNTHGQDSSYFWGWEEYEKNPYDEIKNPDGIIQMGLAENQLSFDLIESWLAKNPDAANFQREGQSIFRELALFQDYHGLPSFKNAMADFMSENRGNRVSFNPNKLVLTAGATPANETLMFCLADPGDAFLLPTPYYPGFDRDLKWRTGAEIVPIQCKSANGFRITKVALEEAYEQAQKLNLKVKGVLITNPSNPLGTTTTRTELNHLLDFISRKKIHLISDEIYSGTVFTNPGFISVMEVLKDRKLENTDVFDRVHIVYSLSKDLGLPGFRVGVIYSNDDFVVSAATKMSSFGLISSQTQYLLSALLSDKTFTKNYLEENQIRLKNRHKKLVSGLEAAGIECLKSNAGLFCWVDMRHLLKSNTFEAEIELWKKIVYEVKLNISPGSSCHCNEPGWFRVCFANLSEETLKVALDRLKRFVDGPSPTRRSQSEHQRLKNLRKMKVSNWVFRLSFHDREPEER.

2 residues coordinate substrate: Glu47 and Tyr85. At Lys272 the chain carries N6-(pyridoxal phosphate)lysine.

It belongs to the class-I pyridoxal-phosphate-dependent aminotransferase family. In terms of assembly, homodimer and heterodimer. In vivo, the relevance of heterodimerization with other ACS enzymes is however unsure. Interacts with GRF3. Requires pyridoxal 5'-phosphate as cofactor. Post-translationally, may be processed at its C-terminus. In terms of tissue distribution, expressed in roots. Expressed at low level in flowers and siliques.

It carries out the reaction S-adenosyl-L-methionine = 1-aminocyclopropane-1-carboxylate + S-methyl-5'-thioadenosine + H(+). It participates in alkene biosynthesis; ethylene biosynthesis via S-adenosyl-L-methionine; ethylene from S-adenosyl-L-methionine: step 1/2. Its function is as follows. 1-aminocyclopropane-1-carboxylate synthase (ACS) enzymes catalyze the conversion of S-adenosyl-L-methionine (SAM) into 1-aminocyclopropane-1-carboxylate (ACC), a direct precursor of ethylene. This is 1-aminocyclopropane-1-carboxylate synthase 8 (ACS8) from Arabidopsis thaliana (Mouse-ear cress).